The primary structure comprises 926 residues: BTB/POZ domain-containing protein KCTD19 (926 aa).

Residues 18–72 form the BTB 1 domain; the sequence is NVGGWHFSVPRSKLSQFPDSLLWKEASALTSSESQRLFIDRDGSTFRHVHYYLYT. The residue at position 270 (Ser270) is a Phosphoserine. Residues 398–485 enclose the BTB 2 domain; the sequence is IKVYVGSHWY…YHIPSLSEAL (88 aa). The interval 673–751 is disordered; it reads GSEAASQPST…PAPEQPLPEA (79 aa). A compositionally biased stretch (basic and acidic residues) spans 730-742; sequence DWSKQRTKERESP.

In terms of assembly, identified in a complex with ZNF541, HDAC1 and HSPA2. Identified in a complex with ZNF541 and HDAC1. Identified in a complex with HDAC1, HDAC2, DNTTIP1 and ZNF541.

Its subcellular location is the nucleus. Its function is as follows. Transcription regulator which is essential for male fertility and for the completion of meiotic prophase in spermatocytes. Regulates progression of the pachytene stage of meiotic prophase and promotes the transcriptional activation activity ZNF541. Required for the organization of chromosomes during metaphase I. In Homo sapiens (Human), this protein is BTB/POZ domain-containing protein KCTD19 (KCTD19).